The primary structure comprises 149 residues: Large ribosomal subunit protein bL20m (149 aa).

A mitochondrion-targeting transit peptide spans 1 to 9; the sequence is MVFLTTRLW.

Belongs to the bacterial ribosomal protein bL20 family. As to quaternary structure, component of the mitochondrial ribosome large subunit (39S) which comprises a 16S rRNA and about 50 distinct proteins. Interacts with OXA1L.

The protein localises to the mitochondrion. The sequence is that of Large ribosomal subunit protein bL20m (Mrpl20) from Mus musculus (Mouse).